The chain runs to 343 residues: L-threonine 3-dehydrogenase (343 aa).

A Zn(2+)-binding site is contributed by Cys-38. Residues Thr-40 and His-43 each act as charge relay system in the active site. Positions 63, 64, 93, 96, 99, and 107 each coordinate Zn(2+). NAD(+) contacts are provided by residues Ile-175, Asp-195, Arg-200, 262–264 (LGI), and 286–287 (IY).

It belongs to the zinc-containing alcohol dehydrogenase family. Homotetramer. Zn(2+) serves as cofactor.

It localises to the cytoplasm. It catalyses the reaction L-threonine + NAD(+) = (2S)-2-amino-3-oxobutanoate + NADH + H(+). It participates in amino-acid degradation; L-threonine degradation via oxydo-reductase pathway; glycine from L-threonine: step 1/2. Its function is as follows. Catalyzes the NAD(+)-dependent oxidation of L-threonine to 2-amino-3-ketobutyrate. The polypeptide is L-threonine 3-dehydrogenase (Burkholderia mallei (strain NCTC 10247)).